Consider the following 485-residue polypeptide: Sulfate adenylyltransferase subunit 1 (485 aa).

A tr-type G domain is found at lysine 30 to arginine 243. A G1 region spans residues glycine 39–serine 46. GTP is bound at residue glycine 39–serine 46. The G2 stretch occupies residues glycine 97–aspartate 101. The G3 stretch occupies residues aspartate 118–glycine 121. Residues aspartate 118–histidine 122 and asparagine 173–aspartate 176 contribute to the GTP site. The interval asparagine 173 to aspartate 176 is G4. Residues serine 210–leucine 212 form a G5 region.

This sequence belongs to the TRAFAC class translation factor GTPase superfamily. Classic translation factor GTPase family. CysN/NodQ subfamily. Heterodimer composed of CysD, the smaller subunit, and CysN.

It catalyses the reaction sulfate + ATP + H(+) = adenosine 5'-phosphosulfate + diphosphate. Its pathway is sulfur metabolism; hydrogen sulfide biosynthesis; sulfite from sulfate: step 1/3. With CysD forms the ATP sulfurylase (ATPS) that catalyzes the adenylation of sulfate producing adenosine 5'-phosphosulfate (APS) and diphosphate, the first enzymatic step in sulfur assimilation pathway. APS synthesis involves the formation of a high-energy phosphoric-sulfuric acid anhydride bond driven by GTP hydrolysis by CysN coupled to ATP hydrolysis by CysD. This chain is Sulfate adenylyltransferase subunit 1, found in Shewanella oneidensis (strain ATCC 700550 / JCM 31522 / CIP 106686 / LMG 19005 / NCIMB 14063 / MR-1).